The sequence spans 307 residues: Aspartate carbamoyltransferase catalytic subunit (307 aa).

R54 and T55 together coordinate carbamoyl phosphate. K83 serves as a coordination point for L-aspartate. Carbamoyl phosphate contacts are provided by R104, H132, and Q135. Residues R165 and R228 each contribute to the L-aspartate site. Residues L267 and P268 each contribute to the carbamoyl phosphate site.

Belongs to the aspartate/ornithine carbamoyltransferase superfamily. ATCase family. In terms of assembly, heterododecamer (2C3:3R2) of six catalytic PyrB chains organized as two trimers (C3), and six regulatory PyrI chains organized as three dimers (R2).

The catalysed reaction is carbamoyl phosphate + L-aspartate = N-carbamoyl-L-aspartate + phosphate + H(+). It functions in the pathway pyrimidine metabolism; UMP biosynthesis via de novo pathway; (S)-dihydroorotate from bicarbonate: step 2/3. In terms of biological role, catalyzes the condensation of carbamoyl phosphate and aspartate to form carbamoyl aspartate and inorganic phosphate, the committed step in the de novo pyrimidine nucleotide biosynthesis pathway. The polypeptide is Aspartate carbamoyltransferase catalytic subunit (Clostridium botulinum (strain Alaska E43 / Type E3)).